A 267-amino-acid chain; its full sequence is PHD finger protein ALFIN-LIKE 7 (267 aa).

The disordered stretch occupies residues 162–207; that stretch reads TKVSNGSSKSNKSNPKPSKQSNSNSKPAKPPQPKDEEDSGPEGTED. Positions 165–188 are enriched in low complexity; sequence SNGSSKSNKSNPKPSKQSNSNSKP. The segment covering 196-207 has biased composition (acidic residues); the sequence is DEEDSGPEGTED. The segment at 211–263 adopts a PHD-type zinc-finger fold; it reads AYMCGACGETYANGEFWICCDVCEKWFHGKCVRITPAKAEHIKQYKCPGCSSK.

The protein belongs to the Alfin family. In terms of assembly, interacts with H3K4me3 and to a lesser extent with H3K4me2.

Its subcellular location is the nucleus. Histone-binding component that specifically recognizes H3 tails trimethylated on 'Lys-4' (H3K4me3), which mark transcription start sites of virtually all active genes. The polypeptide is PHD finger protein ALFIN-LIKE 7 (Oryza sativa subsp. japonica (Rice)).